The sequence spans 565 residues: Arginine--tRNA ligase (565 aa).

The 'HIGH' region signature appears at 128–138 (ANPTGPLHVGH).

This sequence belongs to the class-I aminoacyl-tRNA synthetase family. In terms of assembly, monomer.

The protein localises to the cytoplasm. It carries out the reaction tRNA(Arg) + L-arginine + ATP = L-arginyl-tRNA(Arg) + AMP + diphosphate. In Delftia acidovorans (strain DSM 14801 / SPH-1), this protein is Arginine--tRNA ligase.